The chain runs to 431 residues: tRNA(Ile)-lysidine synthase (431 aa).

20–25 (SGGLDS) contacts ATP.

Belongs to the tRNA(Ile)-lysidine synthase family.

The protein resides in the cytoplasm. The catalysed reaction is cytidine(34) in tRNA(Ile2) + L-lysine + ATP = lysidine(34) in tRNA(Ile2) + AMP + diphosphate + H(+). In terms of biological role, ligates lysine onto the cytidine present at position 34 of the AUA codon-specific tRNA(Ile) that contains the anticodon CAU, in an ATP-dependent manner. Cytidine is converted to lysidine, thus changing the amino acid specificity of the tRNA from methionine to isoleucine. The protein is tRNA(Ile)-lysidine synthase of Escherichia coli O157:H7.